The following is a 681-amino-acid chain: Mating-type protein beta1-1 (681 aa).

A DNA-binding region (homeobox; TALE-type) is located at residues 165–227 (DKNEPTSPTP…DARRRIGWNE (63 aa)). Residues 307 to 318 (LKNDEARRKREA) show a composition bias toward basic and acidic residues. 3 disordered regions span residues 307–341 (LKNDEARRKREASTVGIINQRARHAYPTPERSPAS), 353–381 (AIDSDKLPSVGRKRRRSLESDETVSSPLC), and 394–466 (SPVK…SDPF). The span at 413 to 430 (TSAAPSPQPSLLPKLTPT) shows a compositional bias: low complexity.

Belongs to the TALE/M-ATYP homeobox family. In terms of assembly, may dimerize.

It is found in the nucleus. In terms of biological role, has a major regulatory role in sexual and asexual development. It may bind DNA itself or it may have a role in preventing DNA-binding of another protein. The sequence is that of Mating-type protein beta1-1 from Coprinopsis cinerea (Inky cap fungus).